A 248-amino-acid polypeptide reads, in one-letter code: Tabserin (248 aa).

A signal peptide spans 1–19 (MLKYSALFLYLIYVGGSES). Residues 24 to 248 (IVGGVPVAEE…PYFENGLRKR (225 aa)) form the Peptidase S1 domain. Cysteines 49 and 65 form a disulfide. Active-site charge relay system residues include His-64 and Asp-111. 2 disulfide bridges follow: Cys-175–Cys-189 and Cys-201–Cys-226. Catalysis depends on Ser-205, which acts as the Charge relay system.

The protein belongs to the peptidase S1 family. As to expression, expressed in salivary glands.

It is found in the secreted. Functionally, serine protease that inhibits blood coagulation in a dose-dependent manner. May act by destroying coagulant factors to inhibit blood coagulation. This is Tabserin from Tabanus yao (Horsefly).